A 387-amino-acid chain; its full sequence is Patatin group J-1 (387 aa).

The N-terminal stretch at 1-23 (MATTKSFLILIVMILATTSSTFA) is a signal peptide. Positions 32 to 230 (LSIDGGGIKG…TVGDPALLSL (199 aa)) constitute a PNPLA domain. Residues 36 to 41 (GGGIKG) carry the GXGXXG motif. The GXSXG motif lies at 75 to 79 (GTSTG). Ser77 serves as the catalytic Nucleophile. Asn115 carries N-linked (GlcNAc...) asparagine glycosylation. The Proton acceptor role is filled by Asp216. Positions 216 to 218 (DGG) match the DGA/G motif. Positions 322 to 385 (ENALTGTTTE…NRKKLRANKA (64 aa)) form a coiled coil.

This sequence belongs to the patatin family. Tuber.

The protein resides in the vacuole. Its function is as follows. Probable lipolytic acyl hydrolase (LAH), an activity which is thought to be involved in the response of tubers to pathogens. This is Patatin group J-1 from Solanum tuberosum (Potato).